The sequence spans 122 residues: Small ribosomal subunit protein uS13 (122 aa).

The segment at 92–122 (HRRGLPVRGQRTHTNARTRKGPAKPIAGKKK) is disordered.

It belongs to the universal ribosomal protein uS13 family. Part of the 30S ribosomal subunit. Forms a loose heterodimer with protein S19. Forms two bridges to the 50S subunit in the 70S ribosome.

In terms of biological role, located at the top of the head of the 30S subunit, it contacts several helices of the 16S rRNA. In the 70S ribosome it contacts the 23S rRNA (bridge B1a) and protein L5 of the 50S subunit (bridge B1b), connecting the 2 subunits; these bridges are implicated in subunit movement. Contacts the tRNAs in the A and P-sites. The polypeptide is Small ribosomal subunit protein uS13 (Paracoccus denitrificans (strain Pd 1222)).